A 309-amino-acid chain; its full sequence is Probable manganese-dependent inorganic pyrophosphatase (309 aa).

The Mn(2+) site is built by His-9, Asp-13, Asp-15, Asp-75, His-97, and Asp-149.

It belongs to the PPase class C family. It depends on Mn(2+) as a cofactor.

It is found in the cytoplasm. It catalyses the reaction diphosphate + H2O = 2 phosphate + H(+). This is Probable manganese-dependent inorganic pyrophosphatase from Bacillus anthracis (strain CDC 684 / NRRL 3495).